Here is a 213-residue protein sequence, read N- to C-terminus: Guanylate kinase (213 aa).

One can recognise a Guanylate kinase-like domain in the interval 6-186 (GLLIILSSPS…TEERLKTIVS (181 aa)). 13-20 (SPSGAGKS) provides a ligand contact to ATP.

The protein belongs to the guanylate kinase family.

The protein resides in the cytoplasm. It catalyses the reaction GMP + ATP = GDP + ADP. Essential for recycling GMP and indirectly, cGMP. This is Guanylate kinase from Ruegeria pomeroyi (strain ATCC 700808 / DSM 15171 / DSS-3) (Silicibacter pomeroyi).